Here is a 137-residue protein sequence, read N- to C-terminus: Large ribosomal subunit protein uL16 (137 aa).

The protein belongs to the universal ribosomal protein uL16 family. Part of the 50S ribosomal subunit.

Its function is as follows. Binds 23S rRNA and is also seen to make contacts with the A and possibly P site tRNAs. The chain is Large ribosomal subunit protein uL16 from Rhizobium johnstonii (strain DSM 114642 / LMG 32736 / 3841) (Rhizobium leguminosarum bv. viciae).